A 245-amino-acid polypeptide reads, in one-letter code: MIPKEQKEPVMAVPGDLAEPVPSLDLGKKLSVPQDLMIEELSLRNNRGSLLFQKRQRRVQKFTFELSESLQAILASSARGKVAGRAAQATVPNGLEEQNHHSETHVFQGSPGDPGITHLGAAGTGSVRSPSALAPGYAEPLKGVPPEKFNHTAIPKGYRCPWQEFTSYQDYSSGSRSHTPIPRDYRNFNKTPVPFGGPHVREAIFHAGTPFVPESFSGLELLRLRPNFNRVAQGWVRKLPESEEL.

Position 31 is a phosphoserine (Ser-31). Positions 50–67 are binding to ACTN2, PPP3CA and TCAP; it reads LLFQKRQRRVQKFTFELS. The segment at 67–108 is binding to FLNC; the sequence is SESLQAILASSARGKVAGRAAQATVPNGLEEQNHHSETHVFQ. A disordered region spans residues 93 to 134; it reads NGLEEQNHHSETHVFQGSPGDPGITHLGAAGTGSVRSPSALA. The segment at 180–201 is binding to ACTN2; that stretch reads PIPRDYRNFNKTPVPFGGPHVR.

This sequence belongs to the myozenin family. As to quaternary structure, interacts with ACTN2, LDB3, FLNC, PPP3CA and TCAP. As to expression, expressed specifically in skeletal muscle and is enriched in fast-twitch muscle fibers. Not detected in heart.

It is found in the cytoplasm. The protein localises to the myofibril. Its subcellular location is the sarcomere. The protein resides in the z line. Its function is as follows. Myozenins may serve as intracellular binding proteins involved in linking Z line proteins such as alpha-actinin, gamma-filamin, TCAP/telethonin, LDB3/ZASP and localizing calcineurin signaling to the sarcomere. Plays an important role in the modulation of calcineurin signaling. May play a role in myofibrillogenesis. This Mus musculus (Mouse) protein is Myozenin-3.